Reading from the N-terminus, the 398-residue chain is Na(+)/H(+) antiporter NhaA (398 aa).

Helical transmembrane passes span 19-39, 64-84, 99-119, 130-150, 159-179, 182-202, 222-242, 266-286, 299-319, 337-357, and 370-390; these read IGGILLMLATALALIMANSPG, LLLWINDGLMAGFFFLVGLEL, IILPAIGALGGMVVPSCIYLA, GWAIPAATDIAFALGILSLLG, ILLTTLAIFDDIGAILIIACF, NDIYLPGLLIALLCMLILFIV, IAMLKSGVHATLAGVILAMFI, ATFIILPIFAFANSGINLTNI, IALGLFIGKPLGIISFLWVGV, GMSALAGIGFTMSLFVGSLAF, and LGIIMGSLFSGLLGYLLLNKT.

The protein belongs to the NhaA Na(+)/H(+) (TC 2.A.33) antiporter family.

The protein localises to the cell inner membrane. It catalyses the reaction Na(+)(in) + 2 H(+)(out) = Na(+)(out) + 2 H(+)(in). Its function is as follows. Na(+)/H(+) antiporter that extrudes sodium in exchange for external protons. The sequence is that of Na(+)/H(+) antiporter NhaA from Desulfotalea psychrophila (strain LSv54 / DSM 12343).